Here is a 215-residue protein sequence, read N- to C-terminus: 3,4-dihydroxy-2-butanone 4-phosphate synthase (215 aa).

Residues 38–39, Asp43, 151–155, and Glu175 each bind D-ribulose 5-phosphate; these read RE and RRGHT. Glu39 is a binding site for Mg(2+). His154 is a binding site for Mg(2+).

This sequence belongs to the DHBP synthase family. In terms of assembly, homodimer. The cofactor is Mg(2+). Mn(2+) serves as cofactor.

The catalysed reaction is D-ribulose 5-phosphate = (2S)-2-hydroxy-3-oxobutyl phosphate + formate + H(+). The protein operates within cofactor biosynthesis; riboflavin biosynthesis; 2-hydroxy-3-oxobutyl phosphate from D-ribulose 5-phosphate: step 1/1. Its function is as follows. Catalyzes the conversion of D-ribulose 5-phosphate to formate and 3,4-dihydroxy-2-butanone 4-phosphate. The sequence is that of 3,4-dihydroxy-2-butanone 4-phosphate synthase from Haemophilus influenzae (strain 86-028NP).